Here is a 507-residue protein sequence, read N- to C-terminus: uncharacterized protein (507 aa).

3 disordered regions span residues 91–162, 174–255, and 309–422; these read NEKT…KKLL, EKLQ…QQQQ, and KRKL…NYST. Acidic residues predominate over residues 116–143; it reads DSSESDSSESESDSSESESESESNETSE. Low complexity predominate over residues 144–155; it reads NESSSSSEPESS. The segment covering 174-193 has biased composition (basic and acidic residues); that stretch reads EKLQQEQQKQKEAQKPKEKP. Composition is skewed to low complexity over residues 194 to 236, 243 to 255, and 313 to 350; these read QQQQ…QQIE, PQQQQQQQQQQQQ, and QSQLDNDGLANKNDNNSNNNNYNNSNNNDSNNNNTNKP. Positions 351 to 360 are enriched in basic residues; it reads LSKRQKKLLK. Over residues 378-409 the composition is skewed to low complexity; it reads NNKNDNSTNDSNNNNDNNNNNKNDTNDSNNDD.

This is an uncharacterized protein from Dictyostelium discoideum (Social amoeba).